The following is a 397-amino-acid chain: Tryptophan synthase beta chain (397 aa).

N6-(pyridoxal phosphate)lysine is present on lysine 87.

Belongs to the TrpB family. Tetramer of two alpha and two beta chains. It depends on pyridoxal 5'-phosphate as a cofactor.

It carries out the reaction (1S,2R)-1-C-(indol-3-yl)glycerol 3-phosphate + L-serine = D-glyceraldehyde 3-phosphate + L-tryptophan + H2O. Its pathway is amino-acid biosynthesis; L-tryptophan biosynthesis; L-tryptophan from chorismate: step 5/5. In terms of biological role, the beta subunit is responsible for the synthesis of L-tryptophan from indole and L-serine. This Escherichia coli O17:K52:H18 (strain UMN026 / ExPEC) protein is Tryptophan synthase beta chain.